The following is a 450-amino-acid chain: tRNA modification GTPase MnmE (450 aa).

3 residues coordinate (6S)-5-formyl-5,6,7,8-tetrahydrofolate: R25, E86, and R126. The TrmE-type G domain occupies 221 to 373 (GLRVALVGRP…LVQALLERCG (153 aa)). Residue N231 coordinates K(+). GTP is bound by residues 231–236 (NVGKSS), 250–256 (TELPGTT), 275–278 (DTAG), and 336–339 (NKAD). S235 is a Mg(2+) binding site. 3 residues coordinate K(+): T250, L252, and T255. Position 256 (T256) interacts with Mg(2+). Residue K450 participates in (6S)-5-formyl-5,6,7,8-tetrahydrofolate binding.

It belongs to the TRAFAC class TrmE-Era-EngA-EngB-Septin-like GTPase superfamily. TrmE GTPase family. As to quaternary structure, homodimer. Heterotetramer of two MnmE and two MnmG subunits. K(+) serves as cofactor.

It localises to the cytoplasm. In terms of biological role, exhibits a very high intrinsic GTPase hydrolysis rate. Involved in the addition of a carboxymethylaminomethyl (cmnm) group at the wobble position (U34) of certain tRNAs, forming tRNA-cmnm(5)s(2)U34. The chain is tRNA modification GTPase MnmE from Parasynechococcus marenigrum (strain WH8102).